A 140-amino-acid polypeptide reads, in one-letter code: ATP synthase epsilon chain (140 aa).

This sequence belongs to the ATPase epsilon chain family. In terms of assembly, F-type ATPases have 2 components, CF(1) - the catalytic core - and CF(0) - the membrane proton channel. CF(1) has five subunits: alpha(3), beta(3), gamma(1), delta(1), epsilon(1). CF(0) has three main subunits: a, b and c.

The protein resides in the cell inner membrane. In terms of biological role, produces ATP from ADP in the presence of a proton gradient across the membrane. This is ATP synthase epsilon chain from Nitrosomonas eutropha (strain DSM 101675 / C91 / Nm57).